The sequence spans 265 residues: Early E4 31 kDa protein (265 aa).

Belongs to the adenoviridae E4 30 to 34 kDa protein family. In terms of assembly, interacts with E1B-55k.

Its subcellular location is the host nucleus. It is found in the host cytoplasm. Functionally, plays a major role to prevent cellular inhibition of viral genome replication by nuclear bodies. Assembles an SCF-like E3 ubiquitin ligase complex based on the cellular proteins ELOB, ELOC, CUL5 and RBX1, in cooperation with viral E1B-55K. This viral RING-type ligase ubiquitinates cellular substrates prior to proteasomal degradation: p53/TP53, LIG4, MRE11-RAD50-NBS1 (MRN) complex, ITGA3, DAXX and BLM. The protein is Early E4 31 kDa protein of Canis lupus familiaris (Dog).